A 584-amino-acid chain; its full sequence is uncharacterized protein (584 aa).

Residues 1 to 27 form the signal peptide; the sequence is MGLSRKKIFTWPLLLTGMAVVSTTFSS. The N-palmitoyl cysteine moiety is linked to residue cysteine 28. Residue cysteine 28 is the site of S-diacylglycerol cysteine attachment. A disordered region spans residues 530–570; it reads NLPKKEGSTNQANQQTNQTNRSTDATKKDSSSDETNKNPLA. Over residues 538–552 the composition is skewed to low complexity; sequence TNQANQQTNQTNRST. Residues 553–565 are compositionally biased toward basic and acidic residues; that stretch reads DATKKDSSSDETN.

The protein belongs to the MG067/MG068/MG395 family.

It is found in the cell membrane. This is an uncharacterized protein from Mycoplasmoides gallisepticum (strain R(low / passage 15 / clone 2)) (Mycoplasma gallisepticum).